The primary structure comprises 277 residues: Acyl-coenzyme A thioesterase MBLAC2 (277 aa).

7 residues coordinate Zn(2+): His-80, His-82, Asp-84, His-85, His-167, Asp-186, and His-228.

It belongs to the metallo-beta-lactamase superfamily. Glyoxalase II family. Zn(2+) serves as cofactor.

It is found in the endoplasmic reticulum membrane. Its subcellular location is the cell membrane. The enzyme catalyses hexadecanoyl-CoA + H2O = hexadecanoate + CoA + H(+). It catalyses the reaction dodecanoyl-CoA + H2O = dodecanoate + CoA + H(+). The catalysed reaction is tetradecanoyl-CoA + H2O = tetradecanoate + CoA + H(+). It carries out the reaction octadecanoyl-CoA + H2O = octadecanoate + CoA + H(+). The enzyme catalyses a beta-lactam + H2O = a substituted beta-amino acid. In terms of biological role, acyl-CoA thioesterases are a group of enzymes that catalyze the hydrolysis of acyl-CoAs to the free fatty acid and coenzyme A (CoASH), providing the potential to regulate intracellular levels of acyl-CoAs, free fatty acids and CoASH. Has an acyl-CoA thioesterase activity towards the long chain fatty acyl-CoA thioester palmitoyl-CoA (hexadecanoyl-CoA; C16:0-CoA). Displays a substrate preference for fatty acyl-CoAs with chain-lengths C12-C18. This is Acyl-coenzyme A thioesterase MBLAC2 (MBLAC2) from Gallus gallus (Chicken).